The sequence spans 1142 residues: Fibronectin type-III domain-containing protein 3A (1142 aa).

The disordered stretch occupies residues 104–191 (YGDVDAHSTH…KSGKGKGGTQ (88 aa)). The segment covering 107-145 (VDAHSTHGRSNFRDERSSKTYERLQKKLKDRQGTQKDKM) has biased composition (basic and acidic residues). Low complexity predominate over residues 146-158 (SSPPSSPQKCPSP). Phosphoserine occurs at positions 147, 151, and 157. 9 consecutive Fibronectin type-III domains span residues 212–313 (NIVK…TLSC), 317–409 (IPNP…TSGC), 413–506 (MPAS…TCPD), 510–604 (IPVK…TPAV), 608–701 (PCLP…TAPG), 705–795 (QCKP…TPPS), 805–894 (EISD…TKPL), 895–989 (PPDP…TPKS), and 990–1095 (VPAA…TEPP). Residue K328 is modified to N6-acetyllysine. A helical membrane pass occupies residues 1121 to 1141 (NLVLFAFFSILIAFIIQYFVI).

The protein belongs to the FNDC3 family.

The protein localises to the golgi apparatus membrane. Its function is as follows. Mediates spermatid-Sertoli adhesion during spermatogenesis. This chain is Fibronectin type-III domain-containing protein 3A (FNDC3A), found in Pongo abelii (Sumatran orangutan).